The primary structure comprises 718 residues: Polyribonucleotide nucleotidyltransferase (718 aa).

Mg(2+)-binding residues include Asp-497 and Asp-503. In terms of domain architecture, KH spans 564–623 (PRLLTLKIEPEHIGMVIGPGGKTIKGITEQTSCKIDIADDGTVTIASSEGERAERARQMI). An S1 motif domain is found at 633 to 701 (GEVYLGRVTR…SKGRLNLTRL (69 aa)).

This sequence belongs to the polyribonucleotide nucleotidyltransferase family. Interacts with RNase E (rne). Mg(2+) serves as cofactor.

The protein resides in the cytoplasm. The enzyme catalyses RNA(n+1) + phosphate = RNA(n) + a ribonucleoside 5'-diphosphate. Involved in mRNA degradation. Catalyzes the phosphorolysis of single-stranded polyribonucleotides processively in the 3'- to 5'-direction. This Synechocystis sp. (strain ATCC 27184 / PCC 6803 / Kazusa) protein is Polyribonucleotide nucleotidyltransferase.